A 765-amino-acid polypeptide reads, in one-letter code: MFSKFTSILQHAVEALAPSLPLQEDFVYHWKAITHYYIETSDDKAPVTDTNIPSHLEQMLVILVQEENEREFGETGPCMEYLLHHKILETLYTLGKADCPPGMKQQVLVFYTKLLGKIRQPLLPHINVHRPVQKLIRLCGEVLATPTENEEIQFLCIVCAKLKQDPYLVNFFLENKFKSLVSQGGPNAISEDVLKSQDSLSTDTGQSCQAEEPLGASGTEHTDLGDQPSHQMGDLSTSLENLSVTALPEATVVRPNQDYNLVNSLLNLTRSPDGRIAVKACEGLMLLVSLPEPAAAKCLTQSTCLCELLTDRLASLYKALPQSVDPLDIETVEAVNWGLDSYSHKEDASAFPGKRALISFLSWFDYCDQLIKEAQKTAAVALAKAVHERFFIGVMEPQLMQTSEMGILTSTALLHRIVRQVTSDILLQEMVFFILGEQREPETLAEISRHPLRHRLIEHCDHISDEISIMTLRMFEHLLQKPNEHILYNLVLRNLEERNYTEYKPVCPEDKDVVENGLIAGAVDLEEDPLFTDISPDNTLSNQEWLSSSPPATPDHPKTDGKTEVHKIVNSFLCLVPDEAKSSYHVEGTGYDTYLRDAHRQFRDYCAICLRWEWPGSPKALERCNLEAAFFEGHFLKVLFDRMGRILDQPYDVNLQVTSVLSRLSLFPHPHIHEYLLDPYVNLASGCRSLFSVIVRVVGDLMVRIQRIQDFTPKLLLVRKRLLGLEPEGPVIDHITLLEGVIVLEEFCKELAAIAFVKYHAASTP.

Composition is skewed to polar residues over residues 200 to 209 and 538 to 550; these read LSTDTGQSCQ and NTLS…SSSP. Disordered regions lie at residues 200–234 and 538–562; these read LSTD…QMGD and NTLS…TDGK.

It belongs to the FHIP family.

In terms of biological role, may be required for proper functioning of the nervous system. This chain is FHF complex subunit HOOK interacting protein 2A (FHIP2A), found in Bos taurus (Bovine).